Here is a 159-residue protein sequence, read N- to C-terminus: uncharacterized protein (159 aa).

The region spanning 7-151 is the N-acetyltransferase domain; the sequence is LLINYKTLEE…NPLIWEPAHI (145 aa).

This is an uncharacterized protein from Bacillus pumilus (strain SAFR-032).